The chain runs to 301 residues: 33 kDa chaperonin (301 aa).

Disulfide bonds link C239–C241 and C272–C275.

Belongs to the HSP33 family. In terms of processing, under oxidizing conditions two disulfide bonds are formed involving the reactive cysteines. Under reducing conditions zinc is bound to the reactive cysteines and the protein is inactive.

The protein resides in the cytoplasm. Redox regulated molecular chaperone. Protects both thermally unfolding and oxidatively damaged proteins from irreversible aggregation. Plays an important role in the bacterial defense system toward oxidative stress. The sequence is that of 33 kDa chaperonin from Nostoc punctiforme (strain ATCC 29133 / PCC 73102).